The chain runs to 276 residues: B3 domain-containing protein REM22 (276 aa).

Residues 11–115 constitute a DNA-binding region (TF-B3); the sequence is SETMSIQDTV…VFHFCVYEYG (105 aa). Positions 141–164 are disordered; it reads GNEESTKGLEESPRRGGTSRRRAK. The span at 144–154 shows a compositional bias: basic and acidic residues; that stretch reads ESTKGLEESPR.

The protein resides in the nucleus. This is B3 domain-containing protein REM22 (REM22) from Arabidopsis thaliana (Mouse-ear cress).